A 177-amino-acid polypeptide reads, in one-letter code: Dual-action ribosomal maturation protein DarP (177 aa).

It belongs to the DarP family.

The protein resides in the cytoplasm. Its function is as follows. Member of a network of 50S ribosomal subunit biogenesis factors which assembles along the 30S-50S interface, preventing incorrect 23S rRNA structures from forming. Promotes peptidyl transferase center (PTC) maturation. In Histophilus somni (strain 129Pt) (Haemophilus somnus), this protein is Dual-action ribosomal maturation protein DarP.